Consider the following 487-residue polypeptide: WRKY transcription factor 1 (487 aa).

The tract at residues 69 to 104 (QSEVDVASPVSEKAPKVSESSGALSLQSGSEGNSPF) is disordered. Serine 76 carries the phosphoserine modification. Residues 86-101 (SESSGALSLQSGSEGN) are compositionally biased toward polar residues. The WRKY 1 DNA-binding region spans 105 to 169 (IREKVMEDGY…YFGEHDHPKP (65 aa)). The Zn(2+) site is built by cysteine 136, cysteine 141, histidine 164, and histidine 166. The tract at residues 255–287 (SSRITGDNTHKDYNSPTAKRRKKGGNIELSPVE) is disordered. The Nuclear localization signal signature appears at 273-277 (KRRKK). Residues 301–366 (TLFDIVNDGY…YEGKHDHDMP (66 aa)) constitute a DNA-binding region (WRKY 2). 4 residues coordinate Zn(2+): cysteine 332, cysteine 337, histidine 361, and histidine 363. Residues 380-487 (EVDDKEGDAN…QKPKTEPAQS (108 aa)) are disordered. The segment covering 390-401 (KTPQSSTLQSIT) has biased composition (polar residues). Basic and acidic residues-rich tracts occupy residues 429-462 (LDEK…DDKT) and 476-487 (EEQKPKTEPAQS).

The protein belongs to the WRKY group I family. Expressed to similar levels in root and flower, to a somewhat lower level in stem and to low levels in leaf and siliques.

The protein localises to the nucleus. In terms of biological role, transcription factor. Binds to a 5'-CGTTGACCGAG-3' consensus core sequence which contains a W box, a frequently occurring elicitor-responsive cis-acting element. The polypeptide is WRKY transcription factor 1 (Arabidopsis thaliana (Mouse-ear cress)).